We begin with the raw amino-acid sequence, 258 residues long: Aspartate/glutamate leucyltransferase (258 aa).

The protein belongs to the R-transferase family. Bpt subfamily.

It localises to the cytoplasm. The catalysed reaction is N-terminal L-glutamyl-[protein] + L-leucyl-tRNA(Leu) = N-terminal L-leucyl-L-glutamyl-[protein] + tRNA(Leu) + H(+). The enzyme catalyses N-terminal L-aspartyl-[protein] + L-leucyl-tRNA(Leu) = N-terminal L-leucyl-L-aspartyl-[protein] + tRNA(Leu) + H(+). Functions in the N-end rule pathway of protein degradation where it conjugates Leu from its aminoacyl-tRNA to the N-termini of proteins containing an N-terminal aspartate or glutamate. This chain is Aspartate/glutamate leucyltransferase, found in Rhodopseudomonas palustris (strain ATCC BAA-98 / CGA009).